Reading from the N-terminus, the 262-residue chain is Global transcriptional regulator CodY (262 aa).

The tract at residues 1 to 159 is GAF domain; that stretch reads MAHLLEKTRK…SSTVVGIQLL (159 aa). Residues 207–226 constitute a DNA-binding region (H-T-H motif); the sequence is ASVIADRIGITRSVIVNALR.

The protein belongs to the CodY family.

It localises to the cytoplasm. Its function is as follows. DNA-binding global transcriptional regulator which is involved in the adaptive response to starvation and acts by directly or indirectly controlling the expression of numerous genes in response to nutrient availability. During rapid exponential growth, CodY is highly active and represses genes whose products allow adaptation to nutrient depletion. The polypeptide is Global transcriptional regulator CodY (Streptococcus gordonii (strain Challis / ATCC 35105 / BCRC 15272 / CH1 / DL1 / V288)).